The sequence spans 86 residues: Weak toxin 2 (86 aa).

Positions 1–23 are cleaved as a signal peptide; sequence MKTLLLTLVVVAIVCLDLGYTLT. Intrachain disulfides connect C24–C45, C27–C32, C38–C63, C67–C78, and C79–C84.

Belongs to the three-finger toxin family. Ancestral subfamily. Orphan group II sub-subfamily. Expressed by the venom gland.

The protein localises to the secreted. Its function is as follows. Binds with low affinity to muscular (alpha-1-beta-1-delta-epsilon/CHRNA1-CHRNB1-CHRND-CHRNE) and very low affinity to neuronal (alpha-7/CHRNA7) nicotinic acetylcholine receptor (nAChR). The sequence is that of Weak toxin 2 from Bungarus candidus (Malayan krait).